The chain runs to 149 residues: UPF0178 protein Lmo1456 (149 aa).

The protein belongs to the UPF0178 family.

In Listeria monocytogenes serovar 1/2a (strain ATCC BAA-679 / EGD-e), this protein is UPF0178 protein Lmo1456.